The chain runs to 198 residues: Recombination protein RecR (198 aa).

The C4-type zinc-finger motif lies at 56–71 (CTECRDFSETKICAIC). In terms of domain architecture, Toprim spans 79–174 (HQLCVVESPP…RPSRLAQGLP (96 aa)).

It belongs to the RecR family.

May play a role in DNA repair. It seems to be involved in an RecBC-independent recombinational process of DNA repair. It may act with RecF and RecO. This is Recombination protein RecR from Xylella fastidiosa (strain Temecula1 / ATCC 700964).